A 373-amino-acid polypeptide reads, in one-letter code: ATP-dependent 6-phosphofructokinase (373 aa).

ATP contacts are provided by residues glycine 12, arginine 74–aspartate 75, and glycine 110–threonine 113. Substrate contacts are provided by residues threonine 133 to aspartate 135, arginine 170, methionine 177 to histidine 179, glutamate 230, arginine 291, and tyrosine 297 to arginine 300. The active-site Proton acceptor is aspartate 135.

The protein belongs to the phosphofructokinase type A (PFKA) family. Mixed-substrate PFK group III subfamily. As to quaternary structure, homodimer or homotetramer. Requires Mg(2+) as cofactor.

The protein localises to the cytoplasm. It carries out the reaction beta-D-fructose 6-phosphate + ATP = beta-D-fructose 1,6-bisphosphate + ADP + H(+). Its pathway is carbohydrate degradation; glycolysis; D-glyceraldehyde 3-phosphate and glycerone phosphate from D-glucose: step 3/4. In terms of biological role, catalyzes the phosphorylation of D-fructose 6-phosphate to fructose 1,6-bisphosphate by ATP, the first committing step of glycolysis. The polypeptide is ATP-dependent 6-phosphofructokinase (Propionibacterium freudenreichii subsp. shermanii (strain ATCC 9614 / DSM 4902 / CIP 103027 / NCIMB 8099 / CIRM-BIA1)).